We begin with the raw amino-acid sequence, 498 residues long: WD repeat-containing protein 55 homolog (498 aa).

The segment at 1–133 is disordered; sequence MHTHNNFKTP…TFDLDEDDET (133 aa). Acidic residues-rich tracts occupy residues 12 to 23, 31 to 48, and 83 to 95; these read DEDELDDLDEDM, IEQE…EYDL, and SDSD…DAGD. Residues 114-123 are compositionally biased toward polar residues; that stretch reads PSGSNRQSEA. WD repeat units follow at residues 155–194, 199–238, 242–280, 283–322, 325–364, and 409–448; these read KLED…NKLL, VHSK…LKKL, AHDD…AIFE, ELED…MYVQ, PYEE…YHCD, and QHNM…DFGD.

It belongs to the WD repeat WDR55 family.

The polypeptide is WD repeat-containing protein 55 homolog (Drosophila erecta (Fruit fly)).